Consider the following 317-residue polypeptide: Ribonuclease 3-like protein 2 (317 aa).

The tract at residues 1–26 is disordered; that stretch reads MAPPPAMKPASRKRGPPAPDPVELPP. Residues 16-26 are compositionally biased toward pro residues; the sequence is PPAPDPVELPP. The region spanning 37–185 is the RNase III domain; that stretch reads AARVERLLRY…IAAAVYVDCK (149 aa). 3 residues coordinate Mg(2+): glutamate 74, aspartate 171, and glutamate 174. The 64-residue stretch at 211-274 folds into the DRBM domain; it reads QPVTMLHELC…ARDATRKLAG (64 aa).

Mg(2+) is required as a cofactor. Requires Mn(2+) as cofactor.

Its function is as follows. Cleaves double-stranded RNA (dsRNA). The polypeptide is Ribonuclease 3-like protein 2 (Oryza sativa subsp. japonica (Rice)).